Reading from the N-terminus, the 514-residue chain is 2-isopropylmalate synthase (514 aa).

Residues 5-268 enclose the Pyruvate carboxyltransferase domain; sequence LIIFDTTLRD…DVGIDTTQIV (264 aa). Mn(2+) contacts are provided by Asp-14, His-202, His-204, and Asn-239. Positions 395 to 514 are regulatory domain; it reads KFVSLSQRSE…KDDKLNPQRA (120 aa).

Belongs to the alpha-IPM synthase/homocitrate synthase family. LeuA type 1 subfamily. Homodimer. The cofactor is Mn(2+).

The protein localises to the cytoplasm. It carries out the reaction 3-methyl-2-oxobutanoate + acetyl-CoA + H2O = (2S)-2-isopropylmalate + CoA + H(+). Its pathway is amino-acid biosynthesis; L-leucine biosynthesis; L-leucine from 3-methyl-2-oxobutanoate: step 1/4. Its function is as follows. Catalyzes the condensation of the acetyl group of acetyl-CoA with 3-methyl-2-oxobutanoate (2-ketoisovalerate) to form 3-carboxy-3-hydroxy-4-methylpentanoate (2-isopropylmalate). This is 2-isopropylmalate synthase from Burkholderia cenocepacia (strain HI2424).